Here is a 234-residue protein sequence, read N- to C-terminus: MYQSKEERVHHVFEKIYKHYDRMNSVISFRRHLKWREDTMKRMNVQKGKKALDVCCGTADWTIALAEAVGPSGEVYGLDFSKNMLQVGEQKVKERQLANVKLIHGNAMNIPFPDNTFDYVTIGFGLRNVPDYMTVLKEMYRVVKPGGKVVCLETSQPTLIGFRQLYYFYFRFIMPLFGKLFAKSYEEYSWLQESARDFPGRDELAQMFRDAGFVDIEVKSYTFGVAAMHLGHKR.

Residues Thr-58, Asp-79, and 106–107 (NA) contribute to the S-adenosyl-L-methionine site.

This sequence belongs to the class I-like SAM-binding methyltransferase superfamily. MenG/UbiE family.

It carries out the reaction a 2-demethylmenaquinol + S-adenosyl-L-methionine = a menaquinol + S-adenosyl-L-homocysteine + H(+). It participates in quinol/quinone metabolism; menaquinone biosynthesis; menaquinol from 1,4-dihydroxy-2-naphthoate: step 2/2. Functionally, methyltransferase required for the conversion of demethylmenaquinol (DMKH2) to menaquinol (MKH2). The polypeptide is Demethylmenaquinone methyltransferase (Geobacillus sp. (strain WCH70)).